Consider the following 353-residue polypeptide: Ferredoxin--NADP reductase (353 aa).

FAD contacts are provided by Thr-25, Glu-44, Gln-52, Tyr-57, Val-97, Phe-132, Asp-298, and Ser-339.

It belongs to the ferredoxin--NADP reductase type 2 family. Homodimer. FAD is required as a cofactor.

It carries out the reaction 2 reduced [2Fe-2S]-[ferredoxin] + NADP(+) + H(+) = 2 oxidized [2Fe-2S]-[ferredoxin] + NADPH. The chain is Ferredoxin--NADP reductase from Chlorobium chlorochromatii (strain CaD3).